A 171-amino-acid polypeptide reads, in one-letter code: S-ribosylhomocysteine lyase (171 aa).

The Fe cation site is built by His54, His58, and Cys128.

The protein belongs to the LuxS family. As to quaternary structure, homodimer. It depends on Fe cation as a cofactor.

The catalysed reaction is S-(5-deoxy-D-ribos-5-yl)-L-homocysteine = (S)-4,5-dihydroxypentane-2,3-dione + L-homocysteine. In terms of biological role, involved in the synthesis of autoinducer 2 (AI-2) which is secreted by bacteria and is used to communicate both the cell density and the metabolic potential of the environment. The regulation of gene expression in response to changes in cell density is called quorum sensing. Catalyzes the transformation of S-ribosylhomocysteine (RHC) to homocysteine (HC) and 4,5-dihydroxy-2,3-pentadione (DPD). The polypeptide is S-ribosylhomocysteine lyase (Salmonella agona (strain SL483)).